The sequence spans 170 residues: Photosystem I assembly protein Ycf3 (170 aa).

3 TPR repeats span residues 35–69, 73–106, and 121–154; these read AFTY…EIDP, SYIL…NPSL, and GEQA…APGN.

It belongs to the Ycf3 family.

It localises to the plastid. It is found in the chloroplast thylakoid membrane. Functionally, essential for the assembly of the photosystem I (PSI) complex. May act as a chaperone-like factor to guide the assembly of the PSI subunits. The polypeptide is Photosystem I assembly protein Ycf3 (Cycas taitungensis (Prince sago)).